Here is a 236-residue protein sequence, read N- to C-terminus: Purine nucleoside phosphorylase DeoD-type (236 aa).

His-4 lines the a purine D-ribonucleoside pocket. Residues Gly-20, Arg-24, Arg-43, and 87–90 contribute to the phosphate site; that span reads RVGT. Residues 179–181 and 203–204 contribute to the a purine D-ribonucleoside site; these read EME and SD. Asp-204 (proton donor) is an active-site residue.

Belongs to the PNP/UDP phosphorylase family. In terms of assembly, homohexamer; trimer of homodimers.

The catalysed reaction is a purine D-ribonucleoside + phosphate = a purine nucleobase + alpha-D-ribose 1-phosphate. It catalyses the reaction a purine 2'-deoxy-D-ribonucleoside + phosphate = a purine nucleobase + 2-deoxy-alpha-D-ribose 1-phosphate. Functionally, catalyzes the reversible phosphorolytic breakdown of the N-glycosidic bond in the beta-(deoxy)ribonucleoside molecules, with the formation of the corresponding free purine bases and pentose-1-phosphate. This is Purine nucleoside phosphorylase DeoD-type from Streptococcus pneumoniae (strain JJA).